Reading from the N-terminus, the 173-residue chain is 6,7-dimethyl-8-ribityllumazine synthase (173 aa).

Residues Y34, 65-67 (ALE), and 94-96 (CVI) contribute to the 5-amino-6-(D-ribitylamino)uracil site. A (2S)-2-hydroxy-3-oxobutyl phosphate-binding site is contributed by 99–100 (ET). The Proton donor role is filled by H102. Residue N127 participates in 5-amino-6-(D-ribitylamino)uracil binding. A (2S)-2-hydroxy-3-oxobutyl phosphate-binding site is contributed by R141.

The protein belongs to the DMRL synthase family.

The catalysed reaction is (2S)-2-hydroxy-3-oxobutyl phosphate + 5-amino-6-(D-ribitylamino)uracil = 6,7-dimethyl-8-(1-D-ribityl)lumazine + phosphate + 2 H2O + H(+). Its pathway is cofactor biosynthesis; riboflavin biosynthesis; riboflavin from 2-hydroxy-3-oxobutyl phosphate and 5-amino-6-(D-ribitylamino)uracil: step 1/2. Catalyzes the formation of 6,7-dimethyl-8-ribityllumazine by condensation of 5-amino-6-(D-ribitylamino)uracil with 3,4-dihydroxy-2-butanone 4-phosphate. This is the penultimate step in the biosynthesis of riboflavin. In Methylorubrum extorquens (strain CM4 / NCIMB 13688) (Methylobacterium extorquens), this protein is 6,7-dimethyl-8-ribityllumazine synthase.